A 392-amino-acid polypeptide reads, in one-letter code: CCA-adding enzyme (392 aa).

Positions 45 and 48 each coordinate ATP. Ser45 and Lys48 together coordinate CTP. Residues Asp55, Asp57, and Glu106 each coordinate Mg(2+). His129, Lys148, and Tyr157 together coordinate ATP. CTP-binding residues include His129, Lys148, and Tyr157.

Belongs to the tRNA nucleotidyltransferase/poly(A) polymerase family. Archaeal CCA-adding enzyme subfamily. In terms of assembly, homodimer. It depends on Mg(2+) as a cofactor.

It carries out the reaction a tRNA precursor + 2 CTP + ATP = a tRNA with a 3' CCA end + 3 diphosphate. It catalyses the reaction a tRNA with a 3' CCA end + 2 CTP + ATP = a tRNA with a 3' CCACCA end + 3 diphosphate. Its function is as follows. Catalyzes the addition and repair of the essential 3'-terminal CCA sequence in tRNAs without using a nucleic acid template. Adds these three nucleotides in the order of C, C, and A to the tRNA nucleotide-73, using CTP and ATP as substrates and producing inorganic pyrophosphate. tRNA 3'-terminal CCA addition is required both for tRNA processing and repair. Also involved in tRNA surveillance by mediating tandem CCA addition to generate a CCACCA at the 3' terminus of unstable tRNAs. While stable tRNAs receive only 3'-terminal CCA, unstable tRNAs are marked with CCACCA and rapidly degraded. This chain is CCA-adding enzyme, found in Nanoarchaeum equitans (strain Kin4-M).